The following is a 153-amino-acid chain: Large ribosomal subunit protein uL30 (153 aa).

The protein belongs to the universal ribosomal protein uL30 family. In terms of assembly, part of the 50S ribosomal subunit.

In Methanocorpusculum labreanum (strain ATCC 43576 / DSM 4855 / Z), this protein is Large ribosomal subunit protein uL30.